A 78-amino-acid polypeptide reads, in one-letter code: Pro-glucagon (78 aa).

This sequence belongs to the glucagon family.

The protein resides in the secreted. Its function is as follows. Plays a key role in glucose metabolism and homeostasis. Regulates blood glucose by increasing gluconeogenesis and decreasing glycolysis. In Atractosteus spatula (Alligator gar), this protein is Pro-glucagon (gcg).